The following is a 503-amino-acid chain: UDP-N-acetylmuramoylalanine--D-glutamate ligase (503 aa).

Gly129–Thr135 provides a ligand contact to ATP.

Belongs to the MurCDEF family.

Its subcellular location is the cytoplasm. The catalysed reaction is UDP-N-acetyl-alpha-D-muramoyl-L-alanine + D-glutamate + ATP = UDP-N-acetyl-alpha-D-muramoyl-L-alanyl-D-glutamate + ADP + phosphate + H(+). Its pathway is cell wall biogenesis; peptidoglycan biosynthesis. Functionally, cell wall formation. Catalyzes the addition of glutamate to the nucleotide precursor UDP-N-acetylmuramoyl-L-alanine (UMA). In Burkholderia vietnamiensis (strain G4 / LMG 22486) (Burkholderia cepacia (strain R1808)), this protein is UDP-N-acetylmuramoylalanine--D-glutamate ligase.